Reading from the N-terminus, the 332-residue chain is Ornithine carbamoyltransferase, catabolic (332 aa).

Residues 60-63 (STRT), Q87, R111, and 138-141 (HPTQ) contribute to the carbamoyl phosphate site. Residues N170, D230, and 234 to 235 (SM) each bind L-ornithine. Carbamoyl phosphate-binding positions include 271 to 272 (CL) and R316.

It belongs to the aspartate/ornithine carbamoyltransferase superfamily. OTCase family.

The protein resides in the cytoplasm. It carries out the reaction carbamoyl phosphate + L-ornithine = L-citrulline + phosphate + H(+). The protein operates within amino-acid degradation; L-arginine degradation via ADI pathway; carbamoyl phosphate from L-arginine: step 2/2. In terms of biological role, reversibly catalyzes the transfer of the carbamoyl group from carbamoyl phosphate (CP) to the N(epsilon) atom of ornithine (ORN) to produce L-citrulline. The protein is Ornithine carbamoyltransferase, catabolic (arcB) of Bacillus cereus (strain ATCC 14579 / DSM 31 / CCUG 7414 / JCM 2152 / NBRC 15305 / NCIMB 9373 / NCTC 2599 / NRRL B-3711).